The following is a 328-amino-acid chain: Eukaryotic translation initiation factor 3 subunit I (328 aa).

WD repeat units lie at residues 8 to 47 (GHER…RLGT), 50 to 91 (GHQG…GTIP), 148 to 187 (SIQT…ELNS), 190 to 229 (DHTG…CLKT), and 287 to 328 (GHFG…FVFE).

It belongs to the eIF-3 subunit I family. As to quaternary structure, component of the eukaryotic translation initiation factor 3 (eIF-3) complex.

The protein localises to the cytoplasm. In terms of biological role, component of the eukaryotic translation initiation factor 3 (eIF-3) complex, which is involved in protein synthesis of a specialized repertoire of mRNAs and, together with other initiation factors, stimulates binding of mRNA and methionyl-tRNAi to the 40S ribosome. The eIF-3 complex specifically targets and initiates translation of a subset of mRNAs involved in cell proliferation. The sequence is that of Eukaryotic translation initiation factor 3 subunit I from Culex quinquefasciatus (Southern house mosquito).